We begin with the raw amino-acid sequence, 309 residues long: Coenzyme PQQ synthesis protein B (309 aa).

It belongs to the PqqB family.

Its pathway is cofactor biosynthesis; pyrroloquinoline quinone biosynthesis. Its function is as follows. May be involved in the transport of PQQ or its precursor to the periplasm. The polypeptide is Coenzyme PQQ synthesis protein B (Nitrosococcus oceani (strain ATCC 19707 / BCRC 17464 / JCM 30415 / NCIMB 11848 / C-107)).